A 633-amino-acid polypeptide reads, in one-letter code: Probable methyltransferase PMT17 (633 aa).

Residues 1-18 are Cytoplasmic-facing; it reads MAKENSGHHHQTEARRKK. A helical; Signal-anchor for type II membrane protein transmembrane segment spans residues 19-39; it reads LTLILGVSGLCILFYVLGAWQ. Over 40–633 the chain is Lumenal; that stretch reads ANTVPSSISK…NNNNNNNNNN (594 aa). Positions 50–71 are disordered; that stretch reads LGCETQSNPSSSSSSSSSSESA. Residues 59-70 show a composition bias toward low complexity; the sequence is SSSSSSSSSSES. A glycan (N-linked (GlcNAc...) asparagine) is linked at Asn-87.

The protein belongs to the methyltransferase superfamily.

It is found in the endoplasmic reticulum membrane. The sequence is that of Probable methyltransferase PMT17 from Arabidopsis thaliana (Mouse-ear cress).